The following is a 100-amino-acid chain: Large ribosomal subunit protein eL36B (100 aa).

It belongs to the eukaryotic ribosomal protein eL36 family. Component of the large ribosomal subunit (LSU). Mature yeast ribosomes consist of a small (40S) and a large (60S) subunit. The 40S small subunit contains 1 molecule of ribosomal RNA (18S rRNA) and 33 different proteins (encoded by 57 genes). The large 60S subunit contains 3 rRNA molecules (25S, 5.8S and 5S rRNA) and 46 different proteins (encoded by 81 genes).

The protein resides in the cytoplasm. In terms of biological role, component of the ribosome, a large ribonucleoprotein complex responsible for the synthesis of proteins in the cell. The small ribosomal subunit (SSU) binds messenger RNAs (mRNAs) and translates the encoded message by selecting cognate aminoacyl-transfer RNA (tRNA) molecules. The large subunit (LSU) contains the ribosomal catalytic site termed the peptidyl transferase center (PTC), which catalyzes the formation of peptide bonds, thereby polymerizing the amino acids delivered by tRNAs into a polypeptide chain. The nascent polypeptides leave the ribosome through a tunnel in the LSU and interact with protein factors that function in enzymatic processing, targeting, and the membrane insertion of nascent chains at the exit of the ribosomal tunnel. The sequence is that of Large ribosomal subunit protein eL36B from Saccharomyces cerevisiae (strain ATCC 204508 / S288c) (Baker's yeast).